Reading from the N-terminus, the 240-residue chain is Ribosomal RNA large subunit methyltransferase E (240 aa).

Positions 1 to 20 (MSKAGGNKGGSRTGGRGGAG) are enriched in gly residues. Residues 1–40 (MSKAGGNKGGSRTGGRGGAGSSNLHVRVKKKAGTTKESSR) are disordered. Residues glycine 92, tryptophan 94, aspartate 115, aspartate 131, and aspartate 155 each coordinate S-adenosyl-L-methionine. The Proton acceptor role is filled by lysine 195.

This sequence belongs to the class I-like SAM-binding methyltransferase superfamily. RNA methyltransferase RlmE family.

Its subcellular location is the cytoplasm. The enzyme catalyses uridine(2552) in 23S rRNA + S-adenosyl-L-methionine = 2'-O-methyluridine(2552) in 23S rRNA + S-adenosyl-L-homocysteine + H(+). Functionally, specifically methylates the uridine in position 2552 of 23S rRNA at the 2'-O position of the ribose in the fully assembled 50S ribosomal subunit. This is Ribosomal RNA large subunit methyltransferase E from Brucella ovis (strain ATCC 25840 / 63/290 / NCTC 10512).